A 117-amino-acid chain; its full sequence is EIVSLSLSLLAVVPLVVLVIAGPLNVRGGTPSQQCNTGTPQCCQQVQQTSDLQQFRSSFGLVDALAGASALVGANCNPVSVLGTGNGAQCNTQPVCCTSNQMLGAVNMGCMPLNVNA.

The signal sequence occupies residues 1–21 (EIVSLSLSLLAVVPLVVLVIA). 4 disulfides stabilise this stretch: C35-C96, C42-C90, C43-C76, and C97-C110.

It belongs to the fungal hydrophobin family. Self-assembles to form functional amyloid fibrils called rodlets. Self-assembly into fibrillar rodlets occurs spontaneously at hydrophobic:hydrophilic interfaces and the rodlets further associate laterally to form amphipathic monolayers.

It is found in the secreted. The protein localises to the cell wall. Functionally, aerial growth, conidiation, and dispersal of filamentous fungi in the environment rely upon a capability of their secreting small amphipathic proteins called hydrophobins (HPBs) with low sequence identity. Class I can self-assemble into an outermost layer of rodlet bundles on aerial cell surfaces, conferring cellular hydrophobicity that supports fungal growth, development and dispersal; whereas Class II form highly ordered films at water-air interfaces through intermolecular interactions but contribute nothing to the rodlet structure. The sequence is that of Class I hydrophobin 2 from Pisolithus tinctorius (Dead man's foot).